A 339-amino-acid polypeptide reads, in one-letter code: UDP-glucose 4-epimerase (339 aa).

Residues 12–13 (FI), 32–37 (DNLCNS), 59–60 (DI), 81–85 (FAGLK), Asn100, Ser125, Tyr150, Lys154, and Phe179 each bind NAD(+). The substrate site is built by Ser125 and Tyr150. Tyr150 acts as the Proton acceptor in catalysis. Residues Asn180, 200–201 (NL), 217–219 (AVF), Arg232, and 293–296 (RAGD) each bind substrate.

The protein belongs to the NAD(P)-dependent epimerase/dehydratase family. As to quaternary structure, homodimer. NAD(+) is required as a cofactor.

It carries out the reaction UDP-alpha-D-glucose = UDP-alpha-D-galactose. It functions in the pathway carbohydrate metabolism; galactose metabolism. Functionally, involved in the metabolism of galactose. Plays an essential role in the incorporation of galactose into meningococcal lipopolysaccharide surface molecules, which are important for pathogenesis. Catalyzes the conversion of UDP-galactose (UDP-Gal) to UDP-glucose (UDP-Glc) through a mechanism involving the transient reduction of NAD. This is UDP-glucose 4-epimerase (galE) from Neisseria meningitidis serogroup C.